Reading from the N-terminus, the 278-residue chain is Phosphatidylglycerol--prolipoprotein diacylglyceryl transferase (278 aa).

The next 4 membrane-spanning stretches (helical) occupy residues 19-39 (WYGILMATGVLVATLMAINEG), 49-69 (FIDFLLWAVPIGFIGARIYYV), 86-106 (IWNGGIAIYGGLIAGLIVLLI), and 112-132 (MLPPFLMLDIIAPGVMAAQVI). R134 serves as a coordination point for a 1,2-diacyl-sn-glycero-3-phospho-(1'-sn-glycerol). 3 consecutive transmembrane segments (helical) span residues 174 to 194 (QPTYLYESTLNLIGLILILSL), 204 to 224 (GEIFLSYVIWYSAVRFFVEGM), and 235 to 255 (IRVSQALSLILFFGAIILWIY).

It belongs to the Lgt family.

It localises to the cell membrane. It catalyses the reaction L-cysteinyl-[prolipoprotein] + a 1,2-diacyl-sn-glycero-3-phospho-(1'-sn-glycerol) = an S-1,2-diacyl-sn-glyceryl-L-cysteinyl-[prolipoprotein] + sn-glycerol 1-phosphate + H(+). Its pathway is protein modification; lipoprotein biosynthesis (diacylglyceryl transfer). Functionally, catalyzes the transfer of the diacylglyceryl group from phosphatidylglycerol to the sulfhydryl group of the N-terminal cysteine of a prolipoprotein, the first step in the formation of mature lipoproteins. In Lactobacillus johnsonii (strain CNCM I-12250 / La1 / NCC 533), this protein is Phosphatidylglycerol--prolipoprotein diacylglyceryl transferase.